Reading from the N-terminus, the 195-residue chain is MTDTATSAGKIQPRLKQKYKTEIAANLSKDFGFTNVHQVPGLVKIVVNMGMGEAARDGKVIDGAINDLTLITGQKPQVTKARKSIAQFKLREGQPIGAHVTLRGDRMWEFLDRLLSLALPRIRDFRGLSDKQFDGNGNYTFGLTEQSMFHEINQDRIDRVRGMDITVVTTAKNDEEGRALLKQLGFPFRSVEAAS.

It belongs to the universal ribosomal protein uL5 family. In terms of assembly, part of the 50S ribosomal subunit; part of the 5S rRNA/L5/L18/L25 subcomplex. Contacts the 5S rRNA and the P site tRNA. Forms a bridge to the 30S subunit in the 70S ribosome.

In terms of biological role, this is one of the proteins that bind and probably mediate the attachment of the 5S RNA into the large ribosomal subunit, where it forms part of the central protuberance. In the 70S ribosome it contacts protein S13 of the 30S subunit (bridge B1b), connecting the 2 subunits; this bridge is implicated in subunit movement. Contacts the P site tRNA; the 5S rRNA and some of its associated proteins might help stabilize positioning of ribosome-bound tRNAs. The protein is Large ribosomal subunit protein uL5 of Leifsonia xyli subsp. xyli (strain CTCB07).